The chain runs to 144 residues: Large ribosomal subunit protein uL14 (144 aa).

This sequence belongs to the universal ribosomal protein uL14 family. Part of the 50S ribosomal subunit. Forms a cluster with proteins L3 and L24e, part of which may contact the 16S rRNA in 2 intersubunit bridges.

Binds to 23S rRNA. Forms part of two intersubunit bridges in the 70S ribosome. In Caldivirga maquilingensis (strain ATCC 700844 / DSM 13496 / JCM 10307 / IC-167), this protein is Large ribosomal subunit protein uL14.